Consider the following 432-residue polypeptide: Enolase (432 aa).

(2R)-2-phosphoglycerate is bound at residue Gln-163. Glu-205 serves as the catalytic Proton donor. Positions 241, 289, and 316 each coordinate Mg(2+). (2R)-2-phosphoglycerate-binding residues include Lys-341, Arg-370, Ser-371, and Lys-392. Catalysis depends on Lys-341, which acts as the Proton acceptor.

This sequence belongs to the enolase family. Mg(2+) serves as cofactor.

The protein resides in the cytoplasm. The protein localises to the secreted. It is found in the cell surface. The enzyme catalyses (2R)-2-phosphoglycerate = phosphoenolpyruvate + H2O. It functions in the pathway carbohydrate degradation; glycolysis; pyruvate from D-glyceraldehyde 3-phosphate: step 4/5. Its function is as follows. Catalyzes the reversible conversion of 2-phosphoglycerate (2-PG) into phosphoenolpyruvate (PEP). It is essential for the degradation of carbohydrates via glycolysis. This Treponema pallidum (strain Nichols) protein is Enolase.